Reading from the N-terminus, the 333-residue chain is Adenosine deaminase (333 aa).

Zn(2+) contacts are provided by H12 and H14. Substrate is bound by residues H14 and D16. Residues 14–16 (HLD), S141, and G170 each bind pentostatin. G170 is a substrate binding site. H197 contacts Zn(2+). Residues E200, H221, and D278 each coordinate pentostatin. Catalysis depends on E200, which acts as the Proton donor. Residue D278 participates in Zn(2+) binding. D279 is a substrate binding site.

The protein belongs to the metallo-dependent hydrolases superfamily. Adenosine and AMP deaminases family. Adenosine deaminase subfamily. The cofactor is Zn(2+).

It catalyses the reaction adenosine + H2O + H(+) = inosine + NH4(+). The enzyme catalyses 2'-deoxyadenosine + H2O + H(+) = 2'-deoxyinosine + NH4(+). Catalyzes the hydrolytic deamination of adenosine and 2-deoxyadenosine. The protein is Adenosine deaminase of Salmonella typhimurium (strain LT2 / SGSC1412 / ATCC 700720).